Reading from the N-terminus, the 205-residue chain is Cytochrome c oxidase subunit 3 (205 aa).

5 helical membrane-spanning segments follow: residues 29–49 (TIVF…MYFV), 72–92 (ALLI…GVFA), 104–124 (WFLV…YEYI), 142–162 (FFIT…AFVV), and 184–204 (SYYW…IYFI).

In terms of assembly, associates with subunits I, II and IV to form cytochrome c oxidase. The 4 subunit cytochrome c oxidase forms a supercomplex with the menaquinol-cytochrome c reductase complex (cytochrome bc1).

It is found in the cell membrane. It carries out the reaction 4 Fe(II)-[cytochrome c] + O2 + 8 H(+)(in) = 4 Fe(III)-[cytochrome c] + 2 H2O + 4 H(+)(out). This Corynebacterium glutamicum (strain ATCC 13032 / DSM 20300 / JCM 1318 / BCRC 11384 / CCUG 27702 / LMG 3730 / NBRC 12168 / NCIMB 10025 / NRRL B-2784 / 534) protein is Cytochrome c oxidase subunit 3 (ctaE).